A 240-amino-acid chain; its full sequence is Tetrahydromethanopterin S-methyltransferase subunit A (240 aa).

At 1–218 (MAEKREPAAG…KFHAGVHAGK (218 aa)) the chain is on the cytoplasmic side. Residue H85 participates in 5-hydroxybenzimidazolylcob(I)amide binding. A helical transmembrane segment spans residues 219–239 (FEGIMIGLAITLSLLGLILFG). Residue R240 is a topological domain, extracellular.

It belongs to the MtrA family. As to quaternary structure, the complex is composed of 8 subunits; MtrA, MtrB, MtrC, MtrD, MtrE, MtrF, MtrG and MtrH. 5-hydroxybenzimidazolylcob(I)amide is required as a cofactor.

The protein resides in the cell membrane. The enzyme catalyses 5-methyl-5,6,7,8-tetrahydromethanopterin + coenzyme M + 2 Na(+)(in) = 5,6,7,8-tetrahydromethanopterin + methyl-coenzyme M + 2 Na(+)(out). It functions in the pathway one-carbon metabolism; methanogenesis from CO(2); methyl-coenzyme M from 5,10-methylene-5,6,7,8-tetrahydromethanopterin: step 2/2. Its function is as follows. Part of a complex that catalyzes the formation of methyl-coenzyme M and tetrahydromethanopterin from coenzyme M and methyl-tetrahydromethanopterin. This is an energy-conserving, sodium-ion translocating step. The protein is Tetrahydromethanopterin S-methyltransferase subunit A of Methanohalophilus mahii (strain ATCC 35705 / DSM 5219 / SLP).